The chain runs to 97 residues: YcgL domain-containing protein PSPPH_1548 (97 aa).

The region spanning 3–87 (RICSIYRSPK…AEDDYIEHLP (85 aa)) is the YcgL domain.

In Pseudomonas savastanoi pv. phaseolicola (strain 1448A / Race 6) (Pseudomonas syringae pv. phaseolicola (strain 1448A / Race 6)), this protein is YcgL domain-containing protein PSPPH_1548.